A 434-amino-acid polypeptide reads, in one-letter code: MQLLAIGINHTTAPVSLRERVAFPLEQIKPALGALRTHLAGRNGTEAAILSTCNRTEIYCATDILKPGAEGFEHTLRWLSQHHNVPASDLAPHLYSLPQSEAVRHAFRVASGLDSMVLGETQILGQLKDAVRTAGEAGSLGTYLNQLFQRTFAVAKEVRGQTEIGAHSVSMAAAAVRLAQRIFESVSTQRVLFIGAGEMIELCATHFAAQKPRQVVVANRTVERGEKLAEQLAEQGLTTQAIRLQELGERLHEFDIVVSCTASSLPIIGLGAVERAVKRRKHRPIMMVDLAVPRDVEPEVARLDDVFLYTVDDLGAVVREGNALRQAAVAQAEAIIESRVQNFMHWLETRSVVPVIRELQTAGESIRQAELERARRMLARGDDPEAVLEALSGALTRKFLHGPTHALNHMQGEDREALVRLVPGLFRQSSHSER.

Residues 52–55, Ser-115, 120–122, and Gln-126 each bind substrate; these read TCNR and ETQ. Cys-53 acts as the Nucleophile in catalysis. 195–200 is a binding site for NADP(+); that stretch reads GAGEMI.

The protein belongs to the glutamyl-tRNA reductase family. As to quaternary structure, homodimer.

The catalysed reaction is (S)-4-amino-5-oxopentanoate + tRNA(Glu) + NADP(+) = L-glutamyl-tRNA(Glu) + NADPH + H(+). It participates in porphyrin-containing compound metabolism; protoporphyrin-IX biosynthesis; 5-aminolevulinate from L-glutamyl-tRNA(Glu): step 1/2. Catalyzes the NADPH-dependent reduction of glutamyl-tRNA(Glu) to glutamate 1-semialdehyde (GSA). This chain is Glutamyl-tRNA reductase, found in Cupriavidus pinatubonensis (strain JMP 134 / LMG 1197) (Cupriavidus necator (strain JMP 134)).